A 142-amino-acid polypeptide reads, in one-letter code: FAD synthase (142 aa).

Residues 9 to 10 (TF), 14 to 17 (HPGH), and Asp92 contribute to the ATP site.

The protein belongs to the archaeal FAD synthase family. Homodimer. A divalent metal cation serves as cofactor.

The enzyme catalyses FMN + ATP + H(+) = FAD + diphosphate. The protein operates within cofactor biosynthesis; FAD biosynthesis; FAD from FMN: step 1/1. Functionally, catalyzes the transfer of the AMP portion of ATP to flavin mononucleotide (FMN) to produce flavin adenine dinucleotide (FAD) coenzyme. This chain is FAD synthase, found in Haloferax volcanii (strain ATCC 29605 / DSM 3757 / JCM 8879 / NBRC 14742 / NCIMB 2012 / VKM B-1768 / DS2) (Halobacterium volcanii).